The primary structure comprises 74 residues: Small ribosomal subunit protein bS18 (74 aa).

Belongs to the bacterial ribosomal protein bS18 family. In terms of assembly, part of the 30S ribosomal subunit. Forms a tight heterodimer with protein bS6.

In terms of biological role, binds as a heterodimer with protein bS6 to the central domain of the 16S rRNA, where it helps stabilize the platform of the 30S subunit. The protein is Small ribosomal subunit protein bS18 of Thioalkalivibrio sulfidiphilus (strain HL-EbGR7).